A 133-amino-acid chain; its full sequence is Phosphoribosyl-AMP cyclohydrolase (133 aa).

Residue D77 coordinates Mg(2+). C78 is a Zn(2+) binding site. Mg(2+) contacts are provided by D79 and D81. The Zn(2+) site is built by C95 and C102.

This sequence belongs to the PRA-CH family. Homodimer. Mg(2+) is required as a cofactor. The cofactor is Zn(2+).

It is found in the cytoplasm. It catalyses the reaction 1-(5-phospho-beta-D-ribosyl)-5'-AMP + H2O = 1-(5-phospho-beta-D-ribosyl)-5-[(5-phospho-beta-D-ribosylamino)methylideneamino]imidazole-4-carboxamide. It functions in the pathway amino-acid biosynthesis; L-histidine biosynthesis; L-histidine from 5-phospho-alpha-D-ribose 1-diphosphate: step 3/9. Catalyzes the hydrolysis of the adenine ring of phosphoribosyl-AMP. The protein is Phosphoribosyl-AMP cyclohydrolase of Thiobacillus denitrificans (strain ATCC 25259 / T1).